A 784-amino-acid polypeptide reads, in one-letter code: Lon protease (784 aa).

The region spanning 11–204 (IPVLPLRDVV…YLMAMMESEI (194 aa)) is the Lon N-terminal domain. 356–363 (GPPGVGKT) serves as a coordination point for ATP. The Lon proteolytic domain occupies 592–773 (ENRVGQVTGL…EEVLALALQN (182 aa)). Catalysis depends on residues Ser679 and Lys722.

The protein belongs to the peptidase S16 family. Homohexamer. Organized in a ring with a central cavity.

It is found in the cytoplasm. It catalyses the reaction Hydrolysis of proteins in presence of ATP.. In terms of biological role, ATP-dependent serine protease that mediates the selective degradation of mutant and abnormal proteins as well as certain short-lived regulatory proteins. Required for cellular homeostasis and for survival from DNA damage and developmental changes induced by stress. Degrades polypeptides processively to yield small peptide fragments that are 5 to 10 amino acids long. Binds to DNA in a double-stranded, site-specific manner. The sequence is that of Lon protease from Erwinia amylovora (Fire blight bacteria).